Here is a 461-residue protein sequence, read N- to C-terminus: Squalene synthase BSS (461 aa).

2 residues coordinate NADP(+): arginine 51 and arginine 76. The Mg(2+) site is built by aspartate 79, glutamate 82, and aspartate 83. 3 residues coordinate NADP(+): arginine 219, lysine 322, and arginine 324. A helical membrane pass occupies residues 430–450; that stretch reads VTQHWWSILIFLISIAVFFIP.

Belongs to the phytoene/squalene synthase family. Requires Mg(2+) as cofactor.

It localises to the endoplasmic reticulum membrane. It carries out the reaction 2 (2E,6E)-farnesyl diphosphate + NADPH + H(+) = squalene + 2 diphosphate + NADP(+). The catalysed reaction is 2 (2E,6E)-farnesyl diphosphate + NADH + H(+) = squalene + 2 diphosphate + NAD(+). Converts farnesyl diphosphate (FPP) into squalene, a precursor for sterol biosynthesis in eukaryotes. Does not possess botryococcene synthase activity. The protein is Squalene synthase BSS of Botryococcus braunii (Green alga).